Here is a 120-residue protein sequence, read N- to C-terminus: Large ribosomal subunit protein uL18 (120 aa).

The protein belongs to the universal ribosomal protein uL18 family. In terms of assembly, part of the 50S ribosomal subunit; part of the 5S rRNA/L5/L18/L25 subcomplex. Contacts the 5S and 23S rRNAs.

This is one of the proteins that bind and probably mediate the attachment of the 5S RNA into the large ribosomal subunit, where it forms part of the central protuberance. This is Large ribosomal subunit protein uL18 from Treponema pallidum (strain Nichols).